Consider the following 288-residue polypeptide: Mycothiol S-conjugate amidase (288 aa).

Positions 12, 15, and 142 each coordinate Zn(2+).

It belongs to the MshB deacetylase family. Mca subfamily. Monomer. The cofactor is Zn(2+).

It carries out the reaction mycothiol S-conjugate + H2O = an N-acetyl-L-cysteine-S-conjugate + 1D-myo-inositol 2-amino-2-deoxy-alpha-D-glucopyranoside. With respect to regulation, partially inhibited by MSH when MSmB is used as substrate. Competitively inhibited by the GlcNAc-cyclohexyl derivative 5-(4-chlorophenyl)-N-((2R,3R,4R,5S,6R)-2-(cyclohexylthio)-tetrahydro-4,5-dihydroxy-6-(hydroxymethyl)-2H-pyran-3-yl)furan-2-carboxamide, which also inhibits MshB. A mycothiol (MSH, N-acetyl-cysteinyl-glucosaminyl-inositol) S-conjugate amidase, it recycles conjugated MSH to the N-acetyl cysteine conjugate and the MSH precursor. Involved in MSH-dependent detoxification of a number of alkylating agents and antibiotics. Activity is specific for the mycothiol moiety. Has a low but measurable deacetylation activity on GlcNAc-Ins (N-acetyl-glucosaminyl-inositol), and thus can also directly contribute to the production of MSH. This chain is Mycothiol S-conjugate amidase, found in Mycobacterium tuberculosis (strain ATCC 25618 / H37Rv).